We begin with the raw amino-acid sequence, 185 residues long: Shikimate kinase (185 aa).

Residue G21–T26 participates in ATP binding. T25 contacts Mg(2+). The substrate site is built by D43, R67, and G90. R129 lines the ATP pocket. R147 lines the substrate pocket.

This sequence belongs to the shikimate kinase family. As to quaternary structure, monomer. The cofactor is Mg(2+).

It localises to the cytoplasm. The enzyme catalyses shikimate + ATP = 3-phosphoshikimate + ADP + H(+). It participates in metabolic intermediate biosynthesis; chorismate biosynthesis; chorismate from D-erythrose 4-phosphate and phosphoenolpyruvate: step 5/7. Functionally, catalyzes the specific phosphorylation of the 3-hydroxyl group of shikimic acid using ATP as a cosubstrate. This Bacillus pumilus (strain SAFR-032) protein is Shikimate kinase.